The following is a 240-amino-acid chain: Tetrahydromethanopterin S-methyltransferase subunit A (240 aa).

Topologically, residues Met1–Lys218 are cytoplasmic. A 5-hydroxybenzimidazolylcob(I)amide-binding site is contributed by His85. Residues Ile219–Gly239 traverse the membrane as a helical segment. Residue Arg240 is a topological domain, extracellular.

The protein belongs to the MtrA family. As to quaternary structure, the complex is composed of 8 subunits; MtrA, MtrB, MtrC, MtrD, MtrE, MtrF, MtrG and MtrH. The cofactor is 5-hydroxybenzimidazolylcob(I)amide.

It localises to the cell membrane. It carries out the reaction 5-methyl-5,6,7,8-tetrahydromethanopterin + coenzyme M + 2 Na(+)(in) = 5,6,7,8-tetrahydromethanopterin + methyl-coenzyme M + 2 Na(+)(out). Its pathway is one-carbon metabolism; methanogenesis from CO(2); methyl-coenzyme M from 5,10-methylene-5,6,7,8-tetrahydromethanopterin: step 2/2. Part of a complex that catalyzes the formation of methyl-coenzyme M and tetrahydromethanopterin from coenzyme M and methyl-tetrahydromethanopterin. This is an energy-conserving, sodium-ion translocating step. This is Tetrahydromethanopterin S-methyltransferase subunit A from Methanosarcina acetivorans (strain ATCC 35395 / DSM 2834 / JCM 12185 / C2A).